An 82-amino-acid chain; its full sequence is Ice-structuring protein A (82 aa).

The signal sequence occupies residues 1–23; the sequence is MALSLFTVGQLIFLFWTMRITEA. Positions 24–44 are cleaved as a propeptide — removed by a dipeptidylpeptidase; that stretch reads SPDPAAKAAPAAAAAPAAAAP. Arg-81 carries the post-translational modification Arginine amide.

This sequence belongs to the type-I AFP family. In terms of tissue distribution, detected in liver and in blood serum (at protein level).

It localises to the secreted. Its function is as follows. Contributes to protect fish blood from freezing at subzero sea water temperatures. Lowers the blood freezing point. Binds to nascent ice crystals and prevents further growth. In Pseudopleuronectes americanus (Winter flounder), this protein is Ice-structuring protein A.